A 587-amino-acid polypeptide reads, in one-letter code: Xyloglucan-specific endo-beta-1,4-glucanase BoGH9A (587 aa).

A signal peptide spans 1-19; that stretch reads MKIVRYIALFGILSGLAVA. The N-palmitoyl cysteine moiety is linked to residue Cys20. Cys20 carries the S-diacylglycerol cysteine lipid modification. Residue Asp185 is the Nucleophile of the active site. Catalysis depends on residues His511 and Asp553. Glu562 (proton donor) is an active-site residue.

The protein belongs to the glycosyl hydrolase 9 (cellulase E) family.

The protein localises to the cell outer membrane. The enzyme catalyses xyloglucan + H2O = xyloglucan oligosaccharides.. The protein operates within glucan metabolism; xyloglucan degradation. Its function is as follows. Catalyzes endohydrolysis of 1,4-beta-D-glucosidic linkages in xyloglucan with retention of the beta-configuration of the glycosyl residues in xyloglucan degradation. Cleaves the backbone of the 3 major types of natural xyloglucans (seed galactoxyloglucan from tamarind kernel, dicot fucogalactoxyloglucan from lettuce leaves, and solanaceous arabinogalactoxyloglucan from tomato fruit), to produce xyloglucan oligosaccharides. May be superfluous in xyloglucan degradation compared to BoGH5A (AC A7LXT7), the other Xyloglucan-specific endo-beta-1,4-glucanase. In Bacteroides ovatus (strain ATCC 8483 / DSM 1896 / JCM 5824 / BCRC 10623 / CCUG 4943 / NCTC 11153), this protein is Xyloglucan-specific endo-beta-1,4-glucanase BoGH9A.